Here is a 563-residue protein sequence, read N- to C-terminus: Endoglucanase B (563 aa).

The or 31 signal peptide spans 1–27 (MKKFLVLLIALIMIATLLVVPGVQTSA). Glutamate 204 functions as the Proton donor in the catalytic mechanism. Glutamate 363 serves as the catalytic Nucleophile. Positions 476–495 (SVTPSPSATPSPTTITAPPT) are disordered. The 67-residue stretch at 496–562 (DTVTYGDVNG…VLRSISELPY (67 aa)) folds into the Dockerin domain.

The protein belongs to the glycosyl hydrolase 5 (cellulase A) family.

The enzyme catalyses Endohydrolysis of (1-&gt;4)-beta-D-glucosidic linkages in cellulose, lichenin and cereal beta-D-glucans.. Functionally, this enzyme catalyzes the endohydrolysis of 1,4-beta-glucosidic linkages in cellulose, lichenin and cereal beta-D-glucans. This Acetivibrio thermocellus (strain ATCC 27405 / DSM 1237 / JCM 9322 / NBRC 103400 / NCIMB 10682 / NRRL B-4536 / VPI 7372) (Clostridium thermocellum) protein is Endoglucanase B (celB).